Reading from the N-terminus, the 131-residue chain is mRNA stability protein IGO2 (131 aa).

Residues 1–13 (MSEDLSPTSSRVD) are compositionally biased toward polar residues. The tract at residues 1-26 (MSEDLSPTSSRVDLSNPHGFTKEGVD) is disordered. The residue at position 2 (Ser-2) is an N-acetylserine. Residues Ser-6, Ser-63, Ser-108, and Ser-119 each carry the phosphoserine modification. Residues 81–131 (VNNSSNNLPVTNPSGLRESIIRRRMSSSSGGDSISRQGSISSGPPPRSPNK) form a disordered region. Residues 106–122 (SSSSGGDSISRQGSISS) show a composition bias toward low complexity.

It belongs to the endosulfine family. Phosphorylated by RIM15.

It is found in the cytoplasm. Its subcellular location is the nucleus. Required for TORC1 to properly control gene expression and chronological life span. Plays an essential role in initiation of the G0 program by preventing the degradation of specific nutrient-regulated mRNAs via the 5'-3' mRNA decay pathway. This chain is mRNA stability protein IGO2 (IGO2), found in Saccharomyces cerevisiae (strain ATCC 204508 / S288c) (Baker's yeast).